The primary structure comprises 341 residues: Type II restriction enzyme BgcI specificity subunit S.BcgI (341 aa).

Belongs to the type-I restriction system S methylase family. Heterotrimer of two A and one B subunit. Both subunits are necessary for DNA-binding, which is sequence non-specific. The cofactor is Mg(2+).

The catalysed reaction is Endonucleolytic cleavage of DNA to give specific double-stranded fragments with terminal 5'-phosphates.. Its activity is regulated as follows. DNA restriction requires S-adenosyl-L-methionine and Mg(2+), and is inhibited by S-adenosyl-homocysteine. SAM may be a cofactor for DNA restriction. Its function is as follows. The specificity subunit. A B, G, H and S subtype restriction enzyme that recognizes the double-stranded sequence 5'-CGAN(6)TGC-3' and cleaves bilaterally and symmetrically 10 base pairs upstream and 12 base pairs downstream of the sequence to release a 34-base pair fragment. Methylation of the recognition sequence occurs on the adenine in either one or both strands; seems to methylate restricted DNA. This subunit degrades DNA in a non-specific manner. The protein is Type II restriction enzyme BgcI specificity subunit S.BcgI of Heyndrickxia coagulans (Weizmannia coagulans).